We begin with the raw amino-acid sequence, 38 residues long: Large ribosomal subunit protein bL36 (38 aa).

It belongs to the bacterial ribosomal protein bL36 family.

This Karelsulcia muelleri (strain GWSS) (Sulcia muelleri) protein is Large ribosomal subunit protein bL36.